Here is a 600-residue protein sequence, read N- to C-terminus: Aspartate--tRNA(Asp/Asn) ligase (600 aa).

E181 contacts L-aspartate. The tract at residues 205-208 (QQFK) is aspartate. R227 is a binding site for L-aspartate. ATP contacts are provided by residues 227-229 (RDE) and Q236. H455 is an L-aspartate binding site. ATP is bound at residue E489. R496 lines the L-aspartate pocket. 541–544 (GIDR) contacts ATP.

The protein belongs to the class-II aminoacyl-tRNA synthetase family. Type 1 subfamily. In terms of assembly, homodimer.

It is found in the cytoplasm. The enzyme catalyses tRNA(Asx) + L-aspartate + ATP = L-aspartyl-tRNA(Asx) + AMP + diphosphate. Aspartyl-tRNA synthetase with relaxed tRNA specificity since it is able to aspartylate not only its cognate tRNA(Asp) but also tRNA(Asn). Reaction proceeds in two steps: L-aspartate is first activated by ATP to form Asp-AMP and then transferred to the acceptor end of tRNA(Asp/Asn). This Rubrobacter xylanophilus (strain DSM 9941 / JCM 11954 / NBRC 16129 / PRD-1) protein is Aspartate--tRNA(Asp/Asn) ligase.